The following is a 538-amino-acid chain: Lipid scramblase CLPTM1L (538 aa).

Topologically, residues 1–10 are cytoplasmic; sequence MWSGRSSFTS. The helical transmembrane segment at 11 to 31 threads the bilayer; it reads LVVGVFVVYVVHTCWVMYGIV. The Extracellular segment spans residues 32–284; it reads YTRPCSGDAN…VKGIFVDTNL (253 aa). N-linked (GlcNAc...) asparagine glycosylation is found at Asn-91 and Asn-101. The helical transmembrane segment at 285–305 threads the bilayer; the sequence is YFLALTFFVAAFHLLFDFLAF. Topologically, residues 306-324 are cytoplasmic; that stretch reads KNDISFWKKKKSMIGMSTK. Residues 325-342 traverse the membrane as a helical segment; it reads AVLWRCFSTVVIFLFLLD. Residues 343-346 are Extracellular-facing; that stretch reads EQTS. Residues 347–364 traverse the membrane as a helical segment; that stretch reads LLVLVPAGVGAAIELWKV. Topologically, residues 365-402 are cytoplasmic; the sequence is KKALKMTILWRGLMPEFELGTYSESERKTEEYDTQAMK. The chain crosses the membrane as a helical span at residues 403–423; that stretch reads YLSYLLYPLCVGGAVYSLLNI. Residues 424-428 lie on the Extracellular side of the membrane; that stretch reads KYKSW. The chain crosses the membrane as a helical span at residues 429–449; sequence YSWLINSFVNGVYAFGFLFML. The Cytoplasmic segment spans residues 450 to 538; the sequence is PQLFVNYKLK…EKAARAPHTD (89 aa).

Belongs to the CLPTM1 family.

The protein localises to the endoplasmic reticulum membrane. It catalyses the reaction a 6-(alpha-D-glucosaminyl)-1-(1,2-diacyl-sn-glycero-3-phospho)-1D-myo-inositol(in) = a 6-(alpha-D-glucosaminyl)-1-(1,2-diacyl-sn-glycero-3-phospho)-1D-myo-inositol(out). The catalysed reaction is 6-(alpha-D-glucosaminyl)-(1-octadecanoyl,2-(9Z)-octadecenoyl-sn-glycero-3-phospho)-1D-myo-inositol(in) = 6-(alpha-D-glucosaminyl)-(1-octadecanoyl,2-(9Z)-octadecenoyl-sn-glycero-3-phospho)-1D-myo-inositol(out). It carries out the reaction a 1,2-diacyl-sn-glycero-3-phospho-(1D-myo-inositol)(in) = a 1,2-diacyl-sn-glycero-3-phospho-(1D-myo-inositol)(out). The enzyme catalyses a 1,2-diacyl-sn-glycero-3-phosphocholine(in) = a 1,2-diacyl-sn-glycero-3-phosphocholine(out). It catalyses the reaction a 1,2-diacyl-sn-glycero-3-phosphoethanolamine(in) = a 1,2-diacyl-sn-glycero-3-phosphoethanolamine(out). Its function is as follows. Scramblase that mediates the translocation of glucosaminylphosphatidylinositol (alpha-D-GlcN-(1-6)-(1,2-diacyl-sn-glycero-3-phospho)-1D-myo-inositol, GlcN-PI) across the endoplasmic reticulum (ER) membrane, from the cytosolic leaflet to the luminal leaflet of the ER membrane, where it participates in the biosynthesis of glycosylphosphatidylinositol (GPI). GPI is a lipid glycoconjugate involved in post-translational modification of proteins. Can also translocate 1,2-diacyl-sn-glycero-3-phospho-(1D-myo-inositol) (phosphatidylinositol or PI), as well as several other phospholipids (1,2-diacyl-sn-glycero-3-phosphocholine, 1,2-diacyl-sn-glycero-3-phosphoethanolamine), and N-acetylglucosaminylphosphatidylinositol (GlcNAc-PI) in vitro. This is Lipid scramblase CLPTM1L (CLPTM1L) from Pongo abelii (Sumatran orangutan).